The following is a 125-amino-acid chain: Translation initiation factor 5A (125 aa).

K36 carries the hypusine modification.

The protein belongs to the eIF-5A family.

It localises to the cytoplasm. Its function is as follows. Functions by promoting the formation of the first peptide bond. The protein is Translation initiation factor 5A (eIF5A) of Halorubrum lacusprofundi (strain ATCC 49239 / DSM 5036 / JCM 8891 / ACAM 34).